A 251-amino-acid polypeptide reads, in one-letter code: Malonyl-[acyl-carrier protein] O-methyltransferase (251 aa).

The protein belongs to the methyltransferase superfamily.

It carries out the reaction malonyl-[ACP] + S-adenosyl-L-methionine = malonyl-[ACP] methyl ester + S-adenosyl-L-homocysteine. The protein operates within cofactor biosynthesis; biotin biosynthesis. Converts the free carboxyl group of a malonyl-thioester to its methyl ester by transfer of a methyl group from S-adenosyl-L-methionine (SAM). It allows to synthesize pimeloyl-ACP via the fatty acid synthetic pathway. The sequence is that of Malonyl-[acyl-carrier protein] O-methyltransferase from Salmonella typhimurium (strain LT2 / SGSC1412 / ATCC 700720).